The sequence spans 210 residues: Somatotropin (210 aa).

A signal peptide spans 1–22 (MGQVFLLMPVLLVSCFLSHGAA). His-38 is a Zn(2+) binding site. Cys-71 and Cys-183 are joined by a disulfide. Glu-192 contacts Zn(2+). Cys-200 and Cys-208 are oxidised to a cystine.

It belongs to the somatotropin/prolactin family.

The protein resides in the secreted. In terms of biological role, growth hormone plays an important role in growth control and is involved in the regulation of several anabolic processes. Implicated as an osmoregulatory substance important for seawater adaptation. The chain is Somatotropin (gh) from Oncorhynchus masou (Cherry salmon).